The chain runs to 868 residues: Translation initiation factor IF-2 (868 aa).

Over residues 103–183 (RSELPETSDR…RQAAAERETV (81 aa)) the composition is skewed to basic and acidic residues. The disordered stretch occupies residues 103-274 (RSELPETSDR…GRPMLMPEQK (172 aa)). Residues 190–207 (VAAPPIPRPAPEPRPPAR) are compositionally biased toward pro residues. Over residues 213–254 (PKAEAPRAHPAERETEARGDKRSAGLSRKDEYRELQGDDFRK) the composition is skewed to basic and acidic residues. Residues 255 to 264 (GGGKRKKPKT) are compositionally biased toward basic residues. The 170-residue stretch at 369 to 538 (PRPPVVTIMG…LVQAEVLELK (170 aa)) folds into the tr-type G domain. A G1 region spans residues 378 to 385 (GHVDHGKT). Residue 378–385 (GHVDHGKT) participates in GTP binding. A G2 region spans residues 403–407 (GITQH). Positions 424–427 (DTPG) are G3. GTP-binding positions include 424–428 (DTPGH) and 478–481 (NKMD). A G4 region spans residues 478–481 (NKMD). Positions 514–516 (SAK) are G5.

The protein belongs to the TRAFAC class translation factor GTPase superfamily. Classic translation factor GTPase family. IF-2 subfamily.

It localises to the cytoplasm. In terms of biological role, one of the essential components for the initiation of protein synthesis. Protects formylmethionyl-tRNA from spontaneous hydrolysis and promotes its binding to the 30S ribosomal subunits. Also involved in the hydrolysis of GTP during the formation of the 70S ribosomal complex. This chain is Translation initiation factor IF-2, found in Methylococcus capsulatus (strain ATCC 33009 / NCIMB 11132 / Bath).